Reading from the N-terminus, the 449-residue chain is L-lysine-epsilon aminotransferase (449 aa).

Pyridoxal 5'-phosphate-binding residues include Gly128 and Ala129. 2 residues coordinate 2-oxoglutarate: Arg170 and Gln274. An L-lysine-binding site is contributed by Arg170. Gln274 serves as a coordination point for pyridoxal 5'-phosphate. Residue Lys300 is modified to N6-(pyridoxal phosphate)lysine. A 2-oxoglutarate-binding site is contributed by Arg422.

The protein belongs to the class-III pyridoxal-phosphate-dependent aminotransferase family. Pyridoxal 5'-phosphate is required as a cofactor.

The catalysed reaction is L-lysine + 2-oxoglutarate = (S)-2-amino-6-oxohexanoate + L-glutamate. Its function is as follows. Catalyzes the transfer of the terminal amino group of L-lysine to alpha-ketoglutarate to yield L-glutamate and 2-aminoadipate 6-semialdehyde ((S)-2-amino-6-oxohexanoate), which is spontaneously converted to the dehydrated form 1-piperideine 6-carboxylate. The polypeptide is L-lysine-epsilon aminotransferase (Mycobacterium bovis (strain ATCC BAA-935 / AF2122/97)).